A 74-amino-acid polypeptide reads, in one-letter code: UPF0435 protein GWCH70_0415 (74 aa).

Belongs to the UPF0435 family.

This chain is UPF0435 protein GWCH70_0415, found in Geobacillus sp. (strain WCH70).